The chain runs to 510 residues: NADH-quinone oxidoreductase subunit N (510 aa).

Helical transmembrane passes span 14–34 (LLPE…DLFA), 42–62 (VIGW…IINM), 84–104 (AFKL…LSYL), 113–133 (GEYY…ASSA), 135–155 (LITL…LVGL), 170–190 (VVSG…VYGL), 208–228 (MAGY…GLAF), 247–267 (PTPV…ALIF), 286–306 (FFFE…MIIG), 323–343 (SGIA…SLFF), 346–366 (VIFY…VIMV), 390–410 (AIAM…VGFF), 426–446 (WLAA…FGII), and 466–486 (IWTF…FPGL).

Belongs to the complex I subunit 2 family. As to quaternary structure, NDH-1 is composed of 14 different subunits. Subunits NuoA, H, J, K, L, M, N constitute the membrane sector of the complex.

The protein localises to the cell membrane. The catalysed reaction is a quinone + NADH + 5 H(+)(in) = a quinol + NAD(+) + 4 H(+)(out). In terms of biological role, NDH-1 shuttles electrons from NADH, via FMN and iron-sulfur (Fe-S) centers, to quinones in the respiratory chain. The immediate electron acceptor for the enzyme in this species is believed to be a menaquinone. Couples the redox reaction to proton translocation (for every two electrons transferred, four hydrogen ions are translocated across the cytoplasmic membrane), and thus conserves the redox energy in a proton gradient. This is NADH-quinone oxidoreductase subunit N from Brevibacillus brevis (strain 47 / JCM 6285 / NBRC 100599).